The primary structure comprises 240 residues: UDP-2,3-diacylglucosamine hydrolase (240 aa).

Residues aspartate 8, histidine 10, aspartate 41, asparagine 79, and histidine 114 each coordinate Mn(2+). 79–80 (NR) contacts substrate. The substrate site is built by aspartate 122, serine 160, asparagine 164, lysine 167, and histidine 195. The Mn(2+) site is built by histidine 195 and histidine 197.

It belongs to the LpxH family. Mn(2+) serves as cofactor.

Its subcellular location is the cell inner membrane. It catalyses the reaction UDP-2-N,3-O-bis[(3R)-3-hydroxytetradecanoyl]-alpha-D-glucosamine + H2O = 2-N,3-O-bis[(3R)-3-hydroxytetradecanoyl]-alpha-D-glucosaminyl 1-phosphate + UMP + 2 H(+). It participates in glycolipid biosynthesis; lipid IV(A) biosynthesis; lipid IV(A) from (3R)-3-hydroxytetradecanoyl-[acyl-carrier-protein] and UDP-N-acetyl-alpha-D-glucosamine: step 4/6. Functionally, hydrolyzes the pyrophosphate bond of UDP-2,3-diacylglucosamine to yield 2,3-diacylglucosamine 1-phosphate (lipid X) and UMP by catalyzing the attack of water at the alpha-P atom. Involved in the biosynthesis of lipid A, a phosphorylated glycolipid that anchors the lipopolysaccharide to the outer membrane of the cell. The polypeptide is UDP-2,3-diacylglucosamine hydrolase (Salmonella newport (strain SL254)).